The chain runs to 825 residues: Breast cancer anti-estrogen resistance protein 3 homolog (825 aa).

N-acetylalanine is present on alanine 2. Residues 31–93 form a disordered region; sequence KSPLTEHRPD…PVTQDSIQES (63 aa). Phosphoserine occurs at positions 32, 78, 83, 182, and 290. Over residues 75–93 the composition is skewed to polar residues; that stretch reads HSKSPQQNSPVTQDSIQES. Residues 154 to 253 enclose the SH2 domain; sequence WYHGRIPRQV…QSGAIIFQPI (100 aa). Lysine 334 carries the N6-methyllysine modification. Phosphoserine occurs at positions 358, 363, and 375. Arginine 442 bears the Omega-N-methylarginine mark. At serine 471 the chain carries Phosphoserine. The region spanning 548–818 is the Ras-GEF domain; sequence DPKVIAQHIL…TALSRKLEPP (271 aa). Residues 744–748 form a mediates the interaction with BCAR1/p130CAS region; the sequence is LATAR.

In terms of assembly, part of a complex comprised of PTPRA, BCAR1, BCAR3 (via SH2 domain) and SRC; the formation of the complex is dependent on integrin mediated-tyrosine phosphorylation of PTPRA. Within the complex, interacts (via SH2 domain) with PTPRA (when phosphorylated on 'Tyr-798'). Interacts (via Ras-GEF domain) with BCAR1. Interacts (via Ras-GEF domain) with NEDD9. Interacts with PTK2/FAK1. Interacts with PTPN1. Interacts (via SH2 domain) with EGFR (when tyrosine-phosphorylated). In terms of processing, phosphorylated on tyrosine residues.

Its subcellular location is the cytoplasm. It localises to the cell junction. The protein resides in the focal adhesion. Acts as an adapter protein downstream of several growth factor receptors to promote cell proliferation, migration, and redistribution of actin fibers. Specifically involved in INS/insulin signaling pathway by mediating MAPK1/ERK2-MAPK3/ERK1 activation and DNA synthesis. Promotes insulin-mediated membrane ruffling. In response to vasoconstrictor peptide EDN1, involved in the activation of RAP1 downstream of PTK2B via interaction with phosphorylated BCAR1. Inhibits cell migration and invasion via regulation of TGFB-mediated matrix digestion, actin filament rearrangement, and inhibition of invadopodia activity. May inhibit TGFB-SMAD signaling, via facilitating BCAR1 and SMAD2 and/or SMAD3 interaction. Regulates EGF-induced DNA synthesis. Required for the maintenance of ocular lens morphology and structural integrity, potentially via regulation of focal adhesion complex signaling. Acts upstream of PTPRA to regulate the localization of BCAR1 and PTPRA to focal adhesions, via regulation of SRC-mediated phosphorylation of PTPRA. Positively regulates integrin-induced tyrosine phosphorylation of BCAR1. Acts as a guanine nucleotide exchange factor (GEF) for small GTPases RALA, RAP1A and RRAS. However, in a contrasting study, lacks GEF activity towards RAP1. This chain is Breast cancer anti-estrogen resistance protein 3 homolog (BCAR3), found in Macaca fascicularis (Crab-eating macaque).